Consider the following 131-residue polypeptide: MAGIKALISLSFGGAIGLMFLMLGCALPIYNQYWPLFVLFFYILSPIPYCIARRLVDDTDAMSNACKELAIFLTTGIVVSAFGLPIVFARANLIEWGACALVLTGNTVIFATILGFFLVFGSNDDFSWQQW.

Helical transmembrane passes span 7-27 (LISL…GCAL), 32-52 (QYWP…YCIA), 69-89 (LAIF…IVFA), and 100-120 (ALVL…FLVF).

The protein belongs to the OB-RGRP/VPS55 family.

It localises to the membrane. Negatively regulates growth hormone (GH) receptor cell surface expression in liver. May play a role in liver resistance to GH during periods of reduced nutrient availability. In Bos taurus (Bovine), this protein is Leptin receptor overlapping transcript-like 1 (LEPROTL1).